The primary structure comprises 395 residues: Elongation factor Tu (395 aa).

Positions 10–204 (KPHVNIGTIG…AVDSYIPTPE (195 aa)) constitute a tr-type G domain. The G1 stretch occupies residues 19 to 26 (GHVDHGKT). 19 to 26 (GHVDHGKT) is a GTP binding site. T26 serves as a coordination point for Mg(2+). Residues 60–64 (GITIS) are G2. The interval 81-84 (DCPG) is G3. GTP contacts are provided by residues 81–85 (DCPGH) and 136–139 (NKCD). A G4 region spans residues 136-139 (NKCD). Residues 174-176 (SAL) form a G5 region.

It belongs to the TRAFAC class translation factor GTPase superfamily. Classic translation factor GTPase family. EF-Tu/EF-1A subfamily. As to quaternary structure, monomer.

It localises to the cytoplasm. It catalyses the reaction GTP + H2O = GDP + phosphate + H(+). GTP hydrolase that promotes the GTP-dependent binding of aminoacyl-tRNA to the A-site of ribosomes during protein biosynthesis. The protein is Elongation factor Tu of Listeria monocytogenes serotype 4b (strain CLIP80459).